The primary structure comprises 85 residues: Kunitz-type serine protease inhibitor homolog beta-bungarotoxin B1 chain (85 aa).

The first 24 residues, 1–24 (MSSGGLLLLLGLLTLCAELTPVSS), serve as a signal peptide directing secretion. One can recognise a BPTI/Kunitz inhibitor domain in the interval 31-81 (CDKPPDKGNCGSVRRAFYYDTRLKTCKAFPYRGCNGNGNHFKTETLCRCEC). Intrachain disulfides connect cysteine 31–cysteine 81, cysteine 40–cysteine 64, and cysteine 56–cysteine 77.

This sequence belongs to the venom Kunitz-type family. Heterodimer; disulfide-linked. The A chain has phospholipase A2 activity and the B chain shows homology with the basic protease inhibitors. As to expression, expressed by the venom gland.

It is found in the secreted. In terms of biological role, beta-bungarotoxin is a presynaptic neurotoxin of the venom. The B chain is homologous to venom basic protease inhibitors but has no protease inhibitor activity and is non-toxic. This Bungarus candidus (Malayan krait) protein is Kunitz-type serine protease inhibitor homolog beta-bungarotoxin B1 chain.